Here is a 271-residue protein sequence, read N- to C-terminus: MLSIQQPLLVFSDLDGTLLDSHSYDWQPAAPWLSRLREANVPVILCSSKTSAEMLYLQKTLGLQGLPLIAENGAVIQLAEQWQDIDGFPRIISGISHGEISQVLNTLREKEHFKFTTFDDVDDATIAEWTGLSRSQAALTQLHEASVTLIWRDSDERMAQFTARLNELGLQFMQGARFWHVLDASAGKDQAANWIIATYQQSSGKRPTTLGLGDGPNDAPLLEVMDYAVIVKGLNREGVHLHDEDPTRVWRTQREGPEGWREGLDHFFSAR.

The active-site Nucleophile is aspartate 13. Positions 13, 15, and 214 each coordinate Mg(2+).

It belongs to the HAD-like hydrolase superfamily. MPGP family. Mg(2+) is required as a cofactor.

It is found in the cytoplasm. The catalysed reaction is 2-O-(alpha-D-mannosyl)-3-phosphoglycerate + H2O = (2R)-2-O-(alpha-D-mannosyl)-glycerate + phosphate. The polypeptide is Mannosyl-3-phosphoglycerate phosphatase (Escherichia coli O45:K1 (strain S88 / ExPEC)).